Reading from the N-terminus, the 439-residue chain is MKKPLRWLAALTVLLLPLSALAQQQGLTIDIVGGSASATPIAVIPMPYQGSGTAPQTDVSAVVGADLDRSGQFRTLPAAQIVEKPTRGTEVQFQTWRTLKQNYIVVGRVMNAGEGAYRVEYELFDVAKGERMLGLAMTARANAMRDVSHQMADAIYEKITGVRGAFWTRIAYVTASGKGGAMRYALMVADSDGYNPQTIVRSAEPLLSPNWSPDGKKLAYVSFERGNSSIYLQDIATGARELVSSFRGINGAPSFSPDGRRLALALSRSGNPEIYVMDLGSKQLTQLTNHFGIDTEPTWAPDGGSIYFTSDRGGRPQIYQVAASGGSANRVTFQGNYNATASVSFDGKKIAVAQGSGNTYRIAMMDRSLGSPSWSTLSPGSLDESPSFAPNASMVLYAAREGGRGVLYAVSSDARVRQRLVLADGDVREPAWGPYRTAH.

A signal peptide spans 1-22; sequence MKKPLRWLAALTVLLLPLSALA.

Belongs to the TolB family. In terms of assembly, the Tol-Pal system is composed of five core proteins: the inner membrane proteins TolA, TolQ and TolR, the periplasmic protein TolB and the outer membrane protein Pal. They form a network linking the inner and outer membranes and the peptidoglycan layer.

It localises to the periplasm. In terms of biological role, part of the Tol-Pal system, which plays a role in outer membrane invagination during cell division and is important for maintaining outer membrane integrity. The polypeptide is Tol-Pal system protein TolB (Xanthomonas oryzae pv. oryzae (strain MAFF 311018)).